Reading from the N-terminus, the 533-residue chain is Histone-arginine methyltransferase CARMER (533 aa).

The 310-residue stretch at 143–452 folds into the SAM-dependent MTase PRMT-type domain; it reads ASQYFQFYGY…QSYDVTIDLH (310 aa). Gln156, Arg165, Gly189, Glu211, Glu240, and Thr268 together coordinate S-adenosyl-L-methionine. Arg503 carries the post-translational modification Asymmetric dimethylarginine; by autocatalysis.

This sequence belongs to the class I-like SAM-binding methyltransferase superfamily. Protein arginine N-methyltransferase family. As to quaternary structure, homodimer. In terms of processing, the dimethylated protein is the major form.

It localises to the cytoplasm. Its subcellular location is the nucleus. The catalysed reaction is L-arginyl-[protein] + 2 S-adenosyl-L-methionine = N(omega),N(omega)-dimethyl-L-arginyl-[protein] + 2 S-adenosyl-L-homocysteine + 2 H(+). Methylates (mono- and asymmetric dimethylation) the guanidino nitrogens of arginyl residues in proteins. May methylate histone H3 at 'Arg-17' and activate transcription via chromatin remodeling. This Drosophila willistoni (Fruit fly) protein is Histone-arginine methyltransferase CARMER (Art4).